A 622-amino-acid chain; its full sequence is Low affinity potassium transport system protein Kup (622 aa).

The next 12 helical transmembrane spans lie at 9–29, 49–69, 103–123, 137–157, 165–185, 213–233, 247–267, 276–296, 337–357, 363–383, 396–416, and 419–439; these read LPAI…TSPL, VFGF…IKYL, VIMG…TPAI, PQLD…LFMI, VGKL…GLGL, VSFI…ALYA, WFTV…ALLL, PFFL…AALA, IYIP…IVSF, LAAA…ILST, FVAL…TANL, and LLSG…VMTT.

This sequence belongs to the HAK/KUP transporter (TC 2.A.72) family.

It is found in the cell inner membrane. It catalyses the reaction K(+)(in) + H(+)(in) = K(+)(out) + H(+)(out). In terms of biological role, responsible for the low-affinity transport of potassium into the cell. Likely operates as a K(+):H(+) symporter. The polypeptide is Low affinity potassium transport system protein Kup (Shigella sonnei (strain Ss046)).